The chain runs to 826 residues: MTAFTQIEKSAAVPAPTDFGIEGMTCASCVRRVEKAISAVPGVASATVNLATERASVQFTGAPDTGGVLLAIEKAGYEPKVIIQEFGIEGMTCASCVSRVEKALRTVPGVADASVNLATEKGTVRFVSGVDVAAIEAAVRDAGYDVRKAKASGATAEPEDRRELETRTLKRLVILSAVLTLPLFLVEMGSHFMPGVHEWIMENIGMRHNLYIQFALATAVLFGPGLRFFRKGVPNLLRWTPDMNSLVVLGTTAAWGYSVVATFASGLLPSGTANVYYEAAAVIVTLILLGRYLEARAKGRTSQAIKRLLGLQPKTAFVAHGDEFVEIQISDVVVGDVIRIRPGEKIPVDGTVLDGNSYVDESMITGEPVPVQKAAGAEVVGGTINKNGSFTFRATKVGGDTLLAQIIKMVETAQGSKLPIQALVDKVTAWFVPAVILVAVLTFAAWYVFGPSPALTFALVNAVAVLIIACPCAMGLATPTSIMVGTGRAAELGILFRKGEALQSLREADVIALDKTGTLTKGRPELTDIVPADGFEADEVLSFVASLEALSEHPIAEAIVSAAKSRGIALVPATDFEATPGFGVRGAVSGLPVQVGADRAFSGVGIDVSPFVVEAERLGNSGKSPLYAAIDGRLAAIIAVSDPIKDTTPQAIKALHDLGLKVAMITGDNRRTADAIARQLGIDEVVAEVLPDGKVDAVKRLREGGRKVAFIGDGINDAPALTEADVGIAVGTGTDIAIESADVVLMSGDLIGVPKAIALSKATIRNIKQNLFWAFAYNVSLVPVAAGVLYPLNGTLLSPILAAAAMAMSSVFVLGNALRLRSVNPA.

HMA domains are found at residues 15 to 80 and 82 to 147; these read APTD…YEPK and IIQE…YDVR. Positions 26, 29, 93, and 96 each coordinate Cu cation. The next 6 membrane-spanning stretches (helical) occupy residues 172 to 192, 209 to 229, 246 to 266, 270 to 290, 429 to 449, and 457 to 477; these read LVIL…GSHF, NLYI…LRFF, LVVL…FASG, SGTA…ILLG, AWFV…WYVF, and FALV…MGLA. D514 acts as the 4-aspartylphosphate intermediate in catalysis. Residues D713 and D717 each contribute to the Mg(2+) site. 2 consecutive transmembrane segments (helical) span residues 772–792 and 795–815; these read FWAF…LYPL and TLLS…FVLG.

It belongs to the cation transport ATPase (P-type) (TC 3.A.3) family. Type IB subfamily.

The protein resides in the cell membrane. It catalyses the reaction Cu(2+)(in) + ATP + H2O = Cu(2+)(out) + ADP + phosphate + H(+). Functionally, involved in copper transport. This chain is Copper-transporting ATPase 1 (actP1), found in Rhizobium meliloti (strain 1021) (Ensifer meliloti).